Reading from the N-terminus, the 151-residue chain is Small ribosomal subunit protein uS15 (151 aa).

It belongs to the universal ribosomal protein uS15 family.

The sequence is that of Small ribosomal subunit protein uS15 (RPS13) from Candida maltosa (Yeast).